The chain runs to 1035 residues: Calcium-transporting ATPase 7, plasma membrane-type (1035 aa).

At Met-1–Ala-166 the chain is on the cytoplasmic side. A helical membrane pass occupies residues Leu-167–Ile-187. Residues Lys-188–Asp-194 are Extracellular-facing. The helical transmembrane segment at Gly-195–Val-215 threads the bilayer. Residues Ser-216–Glu-348 lie on the Cytoplasmic side of the membrane. Residues Gly-349 to Leu-369 form a helical membrane-spanning segment. At Thr-370–Asn-395 the chain is on the extracellular side. Asn-391 carries N-linked (GlcNAc...) asparagine glycosylation. A helical membrane pass occupies residues Ala-396–Ile-416. Topologically, residues Pro-417–Lys-818 are cytoplasmic. Catalysis depends on Asp-460, which acts as the 4-aspartylphosphate intermediate. Positions 761 and 765 each coordinate Mg(2+). A helical transmembrane segment spans residues Phe-819 to Val-839. Over Thr-840–Pro-845 the chain is Extracellular. The chain crosses the membrane as a helical span at residues Leu-846 to Leu-866. Over Ala-867–Leu-887 the chain is Cytoplasmic. A helical membrane pass occupies residues Ile-888–Leu-910. Residues Gln-911 to Gly-919 are Extracellular-facing. The chain crosses the membrane as a helical span at residues Ala-920–Asn-940. At Glu-941–Arg-960 the chain is on the cytoplasmic side. Residues Met-961–Thr-981 traverse the membrane as a helical segment. Residues Lys-982 to Gly-990 lie on the Extracellular side of the membrane. The chain crosses the membrane as a helical span at residues Trp-991–Val-1011. Residues Lys-1012–Thr-1035 are Cytoplasmic-facing.

This sequence belongs to the cation transport ATPase (P-type) (TC 3.A.3) family. Type IIB subfamily.

It is found in the golgi apparatus membrane. It carries out the reaction Ca(2+)(in) + ATP + H2O = Ca(2+)(out) + ADP + phosphate + H(+). Activated by calmodulin. This magnesium-dependent enzyme catalyzes the hydrolysis of ATP coupled with the translocation of calcium from the cytosol out of the cell, into the endoplasmic reticulum, or into organelles. Involved in salt stress tolerance. The polypeptide is Calcium-transporting ATPase 7, plasma membrane-type (Oryza sativa subsp. japonica (Rice)).